The primary structure comprises 2230 residues: Probable serine/threonine-protein kinase DDB_G0267686 (2230 aa).

Over residues 1-12 the composition is skewed to low complexity; that stretch reads MEPNNNISNSNN. Disordered regions lie at residues 1-22, 121-152, 270-352, 368-397, 430-451, 464-574, 593-620, 699-849, and 915-974; these read MEPN…GDGK, NNNS…QLNN, DEKE…DKIS, PIIN…RLSS, NGAS…ILST, KNSS…NSPS, GSGS…NSST, QHQQ…LLPS, and SNQI…SSNS. A compositionally biased stretch (basic and acidic residues) spans 270-336; sequence DEKENKEGGQ…NENEKNHNDK (67 aa). Residues 337 to 346 are compositionally biased toward acidic residues; sequence NDDDDDDEDN. Composition is skewed to low complexity over residues 375-388, 430-447, 473-574, 593-602, 610-619, and 699-721; these read SSSN…NNSI, NGAS…GPTP, NNNN…NSPS, GSGSSSLGKG, SYSNNNNNSS, and QHQQ…QQQL. Positions 722–731 are enriched in polar residues; the sequence is KSRSNTTNTP. Residues 745 to 754 show a composition bias toward pro residues; the sequence is NSPPVSPPSS. Composition is skewed to low complexity over residues 755–766 and 783–818; these read PMLSPLSSSPPS and TGSL…RSNS. Over residues 840–849 the composition is skewed to polar residues; sequence YNTTPPLLPS. Positions 991-1119 constitute an RGS domain; it reads SLSALMKDRI…CILHSTTNGT (129 aa). 8 disordered regions span residues 1146–1181, 1220–1243, 1300–1362, 1506–1546, 1563–1611, 1725–1771, 1802–1848, and 1905–1929; these read SKET…INNN, KLSH…NQPL, LSPP…GDQT, QQQQ…QPQQ, PTIP…NNNS, VSNN…NNGN, NNLM…NNNH, and ENNT…TISQ. Composition is skewed to low complexity over residues 1149–1181 and 1222–1239; these read TSNS…INNN and SHSN…SYTS. Positions 1324–1353 are enriched in polar residues; the sequence is TNGSMKSSLFQQQLQPTGSINSSPINNHQV. Low complexity-rich tracts occupy residues 1506-1520 and 1530-1546; these read QQQQ…QFQP and PSSN…QPQQ. A compositionally biased stretch (low complexity) spans 1726–1769; sequence SNNNNINSNNNNNNNNNNNNNNNNNNNNNNNNNNNNNNNSNNNN. Residues 1905 to 1915 are compositionally biased toward low complexity; sequence ENNTTTTTTTT. Polar residues predominate over residues 1916–1929; that stretch reads SNRPFRSNNPTISQ. The region spanning 1949–2208 is the Protein kinase domain; sequence IVFLNKLGEG…SCPEILDSLL (260 aa). Residues 1955–1963 and lysine 1976 each bind ATP; that span reads LGEGTSAKV. Aspartate 2069 functions as the Proton acceptor in the catalytic mechanism.

This sequence belongs to the protein kinase superfamily. TKL Ser/Thr protein kinase family.

The catalysed reaction is L-seryl-[protein] + ATP = O-phospho-L-seryl-[protein] + ADP + H(+). It catalyses the reaction L-threonyl-[protein] + ATP = O-phospho-L-threonyl-[protein] + ADP + H(+). The chain is Probable serine/threonine-protein kinase DDB_G0267686 from Dictyostelium discoideum (Social amoeba).